The chain runs to 316 residues: Protease HtpX homolog (316 aa).

A helical transmembrane segment spans residues 16–36 (LFMALGFTIGGTGGAMIALVV). A Zn(2+)-binding site is contributed by His130. Residue Glu131 is part of the active site. His134 is a binding site for Zn(2+). 2 helical membrane-spanning segments follow: residues 145-165 (MTAT…FFGA) and 174-194 (LATI…QMAI). Glu199 provides a ligand contact to Zn(2+). The disordered stretch occupies residues 285 to 316 (PNFAALSERRGSVSSVPRTRRRSSALDPNGRG).

This sequence belongs to the peptidase M48B family. Zn(2+) is required as a cofactor.

It is found in the cell inner membrane. This Rhizorhabdus wittichii (strain DSM 6014 / CCUG 31198 / JCM 15750 / NBRC 105917 / EY 4224 / RW1) (Sphingomonas wittichii) protein is Protease HtpX homolog.